Reading from the N-terminus, the 365-residue chain is Protein RecA (365 aa).

Residue 69-76 (GPESSGKT) coordinates ATP. The disordered stretch occupies residues 344-365 (LDDNPDTDDHDVEDIDENTDEE). Positions 347–365 (NPDTDDHDVEDIDENTDEE) are enriched in acidic residues.

The protein belongs to the RecA family.

The protein resides in the cytoplasm. Its function is as follows. Can catalyze the hydrolysis of ATP in the presence of single-stranded DNA, the ATP-dependent uptake of single-stranded DNA by duplex DNA, and the ATP-dependent hybridization of homologous single-stranded DNAs. It interacts with LexA causing its activation and leading to its autocatalytic cleavage. This Arthrospira platensis (Spirulina platensis) protein is Protein RecA.